We begin with the raw amino-acid sequence, 306 residues long: Aspartate carbamoyltransferase catalytic subunit (306 aa).

Carbamoyl phosphate-binding residues include R56 and T57. Residue K84 participates in L-aspartate binding. Residues R106, H134, and Q137 each coordinate carbamoyl phosphate. Positions 167 and 221 each coordinate L-aspartate. Carbamoyl phosphate is bound by residues G262 and P263.

The protein belongs to the aspartate/ornithine carbamoyltransferase superfamily. ATCase family. As to quaternary structure, heterododecamer (2C3:3R2) of six catalytic PyrB chains organized as two trimers (C3), and six regulatory PyrI chains organized as three dimers (R2).

It catalyses the reaction carbamoyl phosphate + L-aspartate = N-carbamoyl-L-aspartate + phosphate + H(+). The protein operates within pyrimidine metabolism; UMP biosynthesis via de novo pathway; (S)-dihydroorotate from bicarbonate: step 2/3. Its function is as follows. Catalyzes the condensation of carbamoyl phosphate and aspartate to form carbamoyl aspartate and inorganic phosphate, the committed step in the de novo pyrimidine nucleotide biosynthesis pathway. This Desulforudis audaxviator (strain MP104C) protein is Aspartate carbamoyltransferase catalytic subunit.